A 206-amino-acid polypeptide reads, in one-letter code: Small ribosomal subunit protein uS4 (206 aa).

The span at 1–16 (MTKRQESKYKIDRRMG) shows a compositional bias: basic and acidic residues. The segment at 1–46 (MTKRQESKYKIDRRMGENIWGRPKSPVNRREYGPGQHGQRRKGKLS) is disordered. Residues 94–154 (RRLDAVVYRA…EKSKQLAIVL (61 aa)) form the S4 RNA-binding domain.

Belongs to the universal ribosomal protein uS4 family. In terms of assembly, part of the 30S ribosomal subunit. Contacts protein S5. The interaction surface between S4 and S5 is involved in control of translational fidelity.

Its function is as follows. One of the primary rRNA binding proteins, it binds directly to 16S rRNA where it nucleates assembly of the body of the 30S subunit. With S5 and S12 plays an important role in translational accuracy. The sequence is that of Small ribosomal subunit protein uS4 from Parvibaculum lavamentivorans (strain DS-1 / DSM 13023 / NCIMB 13966).